Consider the following 81-residue polypeptide: Protein Vpu (81 aa).

Residues 1–7 (MQSLQVL) lie on the Extracellular side of the membrane. A helical membrane pass occupies residues 8–28 (AIVALVVATIIAIVVWTIVFI). Over 29-81 (EYRKILRQRKIDRLINRITERAEDSGNESDGDQEELSALVERGHLAPWDVDDL) the chain is Cytoplasmic. A disordered region spans residues 50-81 (AEDSGNESDGDQEELSALVERGHLAPWDVDDL). Phosphoserine; by host CK2 occurs at positions 53 and 57. A compositionally biased stretch (acidic residues) spans 53 to 63 (SGNESDGDQEE).

Belongs to the HIV-1 VPU protein family. In terms of assembly, homopentamer. Interacts with host CD4 and BRTC; these interactions induce proteasomal degradation of CD4. Interacts with host BST2; this interaction leads to the degradation of host BST2. Interacts with host FBXW11. Interacts with host AP1M1; this interaction plays a role in the mistrafficking and subsequent degradation of host BST2. Interacts with host RANBP2; this interaction allows Vpu to down-regulate host BLM sumoylation. In terms of processing, phosphorylated by host CK2. This phosphorylation is necessary for interaction with human BTRC and degradation of CD4.

Its subcellular location is the host membrane. With respect to regulation, ion channel activity is inhibited by hexamethylene amiloride in vitro. Enhances virion budding by targeting host CD4 and Tetherin/BST2 to proteasome degradation. Degradation of CD4 prevents any unwanted premature interactions between viral Env and its host receptor CD4 in the endoplasmic reticulum. Degradation of antiretroviral protein Tetherin/BST2 is important for virion budding, as BST2 tethers new viral particles to the host cell membrane. Mechanistically, Vpu bridges either CD4 or BST2 to BTRC, a substrate recognition subunit of the Skp1/Cullin/F-box protein E3 ubiquitin ligase, induces their ubiquitination and subsequent proteasomal degradation. The alteration of the E3 ligase specificity by Vpu seems to promote the degradation of host IKBKB, leading to NF-kappa-B down-regulation and subsequent apoptosis. Acts as a viroporin that forms an oligomeric ion channel in membranes. Modulates the host DNA repair mechanisms to promote degradation of nuclear viral cDNA in cells that are already productively infected in order to suppress immune sensing and proviral hyper-integration (superinfection). Manipulates PML-NBs and modulates SUMOylation of host BLM protein thereby enhancing its DNA-end processing activity toward viral unintegrated linear DNA. Also inhibits RAD52-mediated homologous repair of viral cDNA, preventing the generation of dead-end circular forms of single copies of the long terminal repeat and permitting sustained nucleolytic attack. In Human immunodeficiency virus type 1 group M subtype B (isolate YU-2) (HIV-1), this protein is Protein Vpu.